A 346-amino-acid chain; its full sequence is Holliday junction branch migration complex subunit RuvB (346 aa).

The segment at 1–182 (MSERLVTSNE…LGVLCSMEYY (182 aa)) is large ATPase domain (RuvB-L). ATP contacts are provided by residues Leu21, Arg22, Gly63, Lys66, Thr67, Thr68, 129 to 131 (EDY), Arg172, Tyr182, and Arg219. Position 67 (Thr67) interacts with Mg(2+). The interval 183–253 (TDEQLKEIII…AAKKSLEILE (71 aa)) is small ATPAse domain (RuvB-S). The interval 256–346 (GEGFDRIDNK…DSKQCTLFEK (91 aa)) is head domain (RuvB-H). The DNA site is built by Arg311 and Arg316.

Belongs to the RuvB family. In terms of assembly, homohexamer. Forms an RuvA(8)-RuvB(12)-Holliday junction (HJ) complex. HJ DNA is sandwiched between 2 RuvA tetramers; dsDNA enters through RuvA and exits via RuvB. An RuvB hexamer assembles on each DNA strand where it exits the tetramer. Each RuvB hexamer is contacted by two RuvA subunits (via domain III) on 2 adjacent RuvB subunits; this complex drives branch migration. In the full resolvosome a probable DNA-RuvA(4)-RuvB(12)-RuvC(2) complex forms which resolves the HJ.

It localises to the cytoplasm. The enzyme catalyses ATP + H2O = ADP + phosphate + H(+). Functionally, the RuvA-RuvB-RuvC complex processes Holliday junction (HJ) DNA during genetic recombination and DNA repair, while the RuvA-RuvB complex plays an important role in the rescue of blocked DNA replication forks via replication fork reversal (RFR). RuvA specifically binds to HJ cruciform DNA, conferring on it an open structure. The RuvB hexamer acts as an ATP-dependent pump, pulling dsDNA into and through the RuvAB complex. RuvB forms 2 homohexamers on either side of HJ DNA bound by 1 or 2 RuvA tetramers; 4 subunits per hexamer contact DNA at a time. Coordinated motions by a converter formed by DNA-disengaged RuvB subunits stimulates ATP hydrolysis and nucleotide exchange. Immobilization of the converter enables RuvB to convert the ATP-contained energy into a lever motion, pulling 2 nucleotides of DNA out of the RuvA tetramer per ATP hydrolyzed, thus driving DNA branch migration. The RuvB motors rotate together with the DNA substrate, which together with the progressing nucleotide cycle form the mechanistic basis for DNA recombination by continuous HJ branch migration. Branch migration allows RuvC to scan DNA until it finds its consensus sequence, where it cleaves and resolves cruciform DNA. This chain is Holliday junction branch migration complex subunit RuvB, found in Clostridium perfringens (strain 13 / Type A).